A 469-amino-acid polypeptide reads, in one-letter code: Ribulose bisphosphate carboxylase large chain (469 aa).

An N6,N6,N6-trimethyllysine modification is found at K5. The substrate site is built by N114 and T164. The active-site Proton acceptor is the K166. A substrate-binding site is contributed by K168. The Mg(2+) site is built by K192, D194, and E195. K192 carries the post-translational modification N6-carboxylysine. The active-site Proton acceptor is the H285. R286, H318, and S370 together coordinate substrate.

It belongs to the RuBisCO large chain family. Type I subfamily. Heterohexadecamer of 8 large chains and 8 small chains; disulfide-linked. The disulfide link is formed within the large subunit homodimers. Mg(2+) serves as cofactor. Post-translationally, the disulfide bond which can form in the large chain dimeric partners within the hexadecamer appears to be associated with oxidative stress and protein turnover.

The protein localises to the plastid. Its subcellular location is the chloroplast. The enzyme catalyses 2 (2R)-3-phosphoglycerate + 2 H(+) = D-ribulose 1,5-bisphosphate + CO2 + H2O. It catalyses the reaction D-ribulose 1,5-bisphosphate + O2 = 2-phosphoglycolate + (2R)-3-phosphoglycerate + 2 H(+). Functionally, ruBisCO catalyzes two reactions: the carboxylation of D-ribulose 1,5-bisphosphate, the primary event in carbon dioxide fixation, as well as the oxidative fragmentation of the pentose substrate in the photorespiration process. Both reactions occur simultaneously and in competition at the same active site. The sequence is that of Ribulose bisphosphate carboxylase large chain from Antirhea lucida (Palo iloron).